A 342-amino-acid chain; its full sequence is Holliday junction branch migration complex subunit RuvB (342 aa).

Residues 1 to 179 form a large ATPase domain (RuvB-L) region; that stretch reads MTNILSPEKS…FGIPMRLNFY (179 aa). Residues isoleucine 18, arginine 19, glycine 60, lysine 63, threonine 64, threonine 65, 126 to 128, arginine 169, tyrosine 179, and arginine 216 each bind ATP; that span reads EDF. Mg(2+) is bound at residue threonine 64. A small ATPAse domain (RuvB-S) region spans residues 180-250; it reads NTEELKQVLN…ICDFGLKRLT (71 aa). The head domain (RuvB-H) stretch occupies residues 253–342; it reads SIGLDSNDYR…NQLNILNENE (90 aa). Residues arginine 289, arginine 308, and arginine 313 each contribute to the DNA site.

This sequence belongs to the RuvB family. As to quaternary structure, homohexamer. Forms an RuvA(8)-RuvB(12)-Holliday junction (HJ) complex. HJ DNA is sandwiched between 2 RuvA tetramers; dsDNA enters through RuvA and exits via RuvB. An RuvB hexamer assembles on each DNA strand where it exits the tetramer. Each RuvB hexamer is contacted by two RuvA subunits (via domain III) on 2 adjacent RuvB subunits; this complex drives branch migration. In the full resolvosome a probable DNA-RuvA(4)-RuvB(12)-RuvC(2) complex forms which resolves the HJ.

The protein resides in the cytoplasm. The enzyme catalyses ATP + H2O = ADP + phosphate + H(+). Its function is as follows. Participates in UV-tolerance of Synechocystis PCC 6803. Functionally, the RuvA-RuvB-RuvC complex processes Holliday junction (HJ) DNA during genetic recombination and DNA repair, while the RuvA-RuvB complex plays an important role in the rescue of blocked DNA replication forks via replication fork reversal (RFR). RuvA specifically binds to HJ cruciform DNA, conferring on it an open structure. The RuvB hexamer acts as an ATP-dependent pump, pulling dsDNA into and through the RuvAB complex. RuvB forms 2 homohexamers on either side of HJ DNA bound by 1 or 2 RuvA tetramers; 4 subunits per hexamer contact DNA at a time. Coordinated motions by a converter formed by DNA-disengaged RuvB subunits stimulates ATP hydrolysis and nucleotide exchange. Immobilization of the converter enables RuvB to convert the ATP-contained energy into a lever motion, pulling 2 nucleotides of DNA out of the RuvA tetramer per ATP hydrolyzed, thus driving DNA branch migration. The RuvB motors rotate together with the DNA substrate, which together with the progressing nucleotide cycle form the mechanistic basis for DNA recombination by continuous HJ branch migration. Branch migration allows RuvC to scan DNA until it finds its consensus sequence, where it cleaves and resolves cruciform DNA. This is Holliday junction branch migration complex subunit RuvB from Rickettsia prowazekii (strain Madrid E).